A 237-amino-acid chain; its full sequence is Pheromone-regulated membrane protein 8 (237 aa).

The Cytoplasmic portion of the chain corresponds to 1–47; it reads MQTPSENTNAKSDSLDEPGAYLIEENVALPKDIFHSYLSYWIYEAAH. A helical transmembrane segment spans residues 48-68; the sequence is CTPVMLLSLVIGVLISIIILF. Residues 69–74 lie on the Extracellular side of the membrane; that stretch reads HDNENC. Residues 75–95 form a helical membrane-spanning segment; that stretch reads VGVSVGFLLIFSGILVIVLIL. The Cytoplasmic segment spans residues 96-237; sequence RFGPQISDED…QEYPGVDEFF (142 aa). Residues 174-201 form a disordered region; that stretch reads SSASNVKDAQSNDETAGTPNEAAESSSF. The interval 236–237 is COPII binding; sequence FF.

The protein belongs to the DUP/COS family. As to quaternary structure, interacts with PRM9. Binds to SEC23/24 of COPII coated vesicles.

The protein resides in the membrane. The protein localises to the endoplasmic reticulum. May be involved in endoplasmic reticulum exit trafficking of proteins. This Saccharomyces cerevisiae (strain ATCC 204508 / S288c) (Baker's yeast) protein is Pheromone-regulated membrane protein 8 (PRM8).